We begin with the raw amino-acid sequence, 141 residues long: Acetyltransferase YpeA (141 aa).

The region spanning 1–141 (MEIRVFRQED…GKRLIEDEEY (141 aa)) is the N-acetyltransferase domain.

This sequence belongs to the acetyltransferase family. YpeA subfamily.

The protein is Acetyltransferase YpeA of Salmonella choleraesuis (strain SC-B67).